The primary structure comprises 179 residues: Adenine phosphoribosyltransferase (179 aa).

This sequence belongs to the purine/pyrimidine phosphoribosyltransferase family. As to quaternary structure, homodimer.

The protein localises to the cytoplasm. The catalysed reaction is AMP + diphosphate = 5-phospho-alpha-D-ribose 1-diphosphate + adenine. It participates in purine metabolism; AMP biosynthesis via salvage pathway; AMP from adenine: step 1/1. Its function is as follows. Catalyzes a salvage reaction resulting in the formation of AMP, that is energically less costly than de novo synthesis. This Mycolicibacterium gilvum (strain PYR-GCK) (Mycobacterium gilvum (strain PYR-GCK)) protein is Adenine phosphoribosyltransferase.